The chain runs to 84 residues: Large ribosomal subunit protein uL23 (84 aa).

Belongs to the universal ribosomal protein uL23 family. Part of the 50S ribosomal subunit. Contacts protein L29.

Functionally, binds to 23S rRNA. One of the proteins that surrounds the polypeptide exit tunnel on the outside of the ribosome. The polypeptide is Large ribosomal subunit protein uL23 (Thermoplasma acidophilum (strain ATCC 25905 / DSM 1728 / JCM 9062 / NBRC 15155 / AMRC-C165)).